We begin with the raw amino-acid sequence, 287 residues long: Polyamine aminopropyltransferase (287 aa).

The PABS domain maps to 9–242; the sequence is GSWLDEYQND…GIWSWTFASI (234 aa). Glutamine 36 is a binding site for S-methyl-5'-thioadenosine. Spermidine contacts are provided by histidine 67 and aspartate 91. Residues glutamate 111 and 143–144 each bind S-methyl-5'-thioadenosine; that span reads NG. Aspartate 162 functions as the Proton acceptor in the catalytic mechanism. Proline 169 contacts S-methyl-5'-thioadenosine.

Belongs to the spermidine/spermine synthase family. In terms of assembly, homodimer or homotetramer.

It is found in the cytoplasm. The enzyme catalyses S-adenosyl 3-(methylsulfanyl)propylamine + putrescine = S-methyl-5'-thioadenosine + spermidine + H(+). It functions in the pathway amine and polyamine biosynthesis; spermidine biosynthesis; spermidine from putrescine: step 1/1. Its function is as follows. Catalyzes the irreversible transfer of a propylamine group from the amino donor S-adenosylmethioninamine (decarboxy-AdoMet) to putrescine (1,4-diaminobutane) to yield spermidine. The polypeptide is Polyamine aminopropyltransferase (Prochlorococcus marinus (strain SARG / CCMP1375 / SS120)).